Consider the following 406-residue polypeptide: MGPIKTIKKKKRAEKKVDRNVLLAATAAATSASAAAALNNNDDDDDSSSQSLDWWDGFSRRIYGGSTDPKTFESVFKISRKTFDYICSLVKADFTAKPANFSDSNGNPLSLNDRVAVALRRLGSGESLSVIGETFGMNQSTVSQITWRFVESMEERAIHHLSWPSKLDEIKSKFEKISGLPNCCGAIDITHIVMNLPAVEPSNKVWLDGEKNFSMTLQAVVDPDMRFLDVIAGWPGSLNDDVVLKNSGFYKLVEKGKRLNGEKLPLSERTELREYIVGDSGFPLLPWLLTPYQGKPTSLPQTEFNKRHSEATKAAQMALSKLKDRWRIINGVMWMPDRNRLPRIIFVCCLLHNIIIDMEDQTLDDQPLSQQHDMNYRQRSCKLADEASSVLRDELSDQLCGKNSSA.

Residues 8–15 carry the Nuclear localization signal motif; sequence KKKKRAEK. The DDE Tnp4 domain maps to 187 to 353; it reads IDITHIVMNL…IIFVCCLLHN (167 aa). Asp188, Asp240, and Asp279 together coordinate a divalent metal cation.

The protein belongs to the HARBI1 family. A divalent metal cation serves as cofactor.

It localises to the nucleus. Transposase-derived protein that may have nuclease activity. The protein is Protein ALP1-like of Arabidopsis thaliana (Mouse-ear cress).